Reading from the N-terminus, the 43-residue chain is uncharacterized protein (43 aa).

This is an uncharacterized protein from Dictyostelium discoideum (Social amoeba).